Reading from the N-terminus, the 86-residue chain is RNA-binding protein Hfq (86 aa).

The Sm domain maps to 9 to 68 (DPYLNTLRKEKVGVSIYLVNGIKLQGTIESFDQFVILLKNTVSQMVYKHAISTVVPVRPI).

Belongs to the Hfq family. As to quaternary structure, homohexamer.

Its function is as follows. RNA chaperone that binds small regulatory RNA (sRNAs) and mRNAs to facilitate mRNA translational regulation in response to envelope stress, environmental stress and changes in metabolite concentrations. Also binds with high specificity to tRNAs. The protein is RNA-binding protein Hfq of Pseudomonas fluorescens (strain Pf0-1).